A 203-amino-acid chain; its full sequence is Glycerol-3-phosphate acyltransferase (203 aa).

A run of 5 helical transmembrane segments spans residues 6–26 (LTLA…AVLV), 56–76 (AAAM…YVAF), 82–102 (AVSL…PIFF), 118–138 (APIG…VVLI), and 141–161 (YSSL…WYFD).

This sequence belongs to the PlsY family. In terms of assembly, probably interacts with PlsX.

The protein localises to the cell inner membrane. The catalysed reaction is an acyl phosphate + sn-glycerol 3-phosphate = a 1-acyl-sn-glycero-3-phosphate + phosphate. It functions in the pathway lipid metabolism; phospholipid metabolism. Functionally, catalyzes the transfer of an acyl group from acyl-phosphate (acyl-PO(4)) to glycerol-3-phosphate (G3P) to form lysophosphatidic acid (LPA). This enzyme utilizes acyl-phosphate as fatty acyl donor, but not acyl-CoA or acyl-ACP. The sequence is that of Glycerol-3-phosphate acyltransferase from Shewanella loihica (strain ATCC BAA-1088 / PV-4).